The following is a 440-amino-acid chain: Xaa-Pro dipeptidase (440 aa).

Mn(2+) contacts are provided by Asp-244, Asp-255, His-335, Glu-380, and Glu-419.

Belongs to the peptidase M24B family. Bacterial-type prolidase subfamily. Mn(2+) serves as cofactor.

The enzyme catalyses Xaa-L-Pro dipeptide + H2O = an L-alpha-amino acid + L-proline. In terms of biological role, splits dipeptides with a prolyl residue in the C-terminal position. The polypeptide is Xaa-Pro dipeptidase (Shewanella piezotolerans (strain WP3 / JCM 13877)).